A 182-amino-acid polypeptide reads, in one-letter code: UPF0398 protein RBAM_020340 (182 aa).

The protein belongs to the UPF0398 family.

This is UPF0398 protein RBAM_020340 from Bacillus velezensis (strain DSM 23117 / BGSC 10A6 / LMG 26770 / FZB42) (Bacillus amyloliquefaciens subsp. plantarum).